The chain runs to 205 residues: MNQQYPSVLLEKAVGEFSKLPGIGRKTAMRLVLHLLRQDTATVEAFGNSIITLKREVKYCKVCHNISDTETCQICANPQRDASTVCVVENIRDVMAVEATQQYRGLYHVLGGVISPMDGVGPSDLQIESLVQRVSEGGIKEVILALSTTMEGDTTNFYIYRKLEKMGVKLSVIARGISVGDELEYADEITLGRSIVNRTLFTGTV.

Residues 60–75 (CKVCHNISDTETCQIC) form a C4-type zinc finger. In terms of domain architecture, Toprim spans 83–178 (STVCVVENIR…KLSVIARGIS (96 aa)).

This sequence belongs to the RecR family.

In terms of biological role, may play a role in DNA repair. It seems to be involved in an RecBC-independent recombinational process of DNA repair. It may act with RecF and RecO. This Bacteroides thetaiotaomicron (strain ATCC 29148 / DSM 2079 / JCM 5827 / CCUG 10774 / NCTC 10582 / VPI-5482 / E50) protein is Recombination protein RecR.